Reading from the N-terminus, the 156-residue chain is Small ribosomal subunit protein uS7 (156 aa).

The protein belongs to the universal ribosomal protein uS7 family. Part of the 30S ribosomal subunit. Contacts proteins S9 and S11.

Functionally, one of the primary rRNA binding proteins, it binds directly to 16S rRNA where it nucleates assembly of the head domain of the 30S subunit. Is located at the subunit interface close to the decoding center, probably blocks exit of the E-site tRNA. The chain is Small ribosomal subunit protein uS7 from Mesomycoplasma hyopneumoniae (strain 232) (Mycoplasma hyopneumoniae).